Reading from the N-terminus, the 172-residue chain is Large ribosomal subunit protein uL11m (172 aa).

The protein belongs to the universal ribosomal protein uL11 family.

The protein localises to the mitochondrion. The protein is Large ribosomal subunit protein uL11m (mrpl11) of Dictyostelium discoideum (Social amoeba).